The chain runs to 324 residues: MESKKLIPEEVHTSVLLNEVIEWLAPKPGGRYLDGTLGMAGHSSAILKIAGEGAELAGLDRDEQALELAGERLAPFGDRAHRFHLAFSKFEAALDELGWDTVDGVVLDLGVSSLHLDHAERGFSFIKDGPLDMRMDPAGGMPPASSIVNKGSYSDLNRILKLYGEEPLASKITKAIIAAREEEKITTTLQLASIVEKAYPAKRRALSRTHPATKTFQGLRIAVNSELEELKTFLDRIPERLSPGARVAIISFHSLEDRIVKKTFKAQSQSCDCPPMQPICTCGKVKLMNVLTRKPVLPTEEEMKVNTRSRSAKLRVAERTGEDG.

Residues 40-42 (AGH), aspartate 60, leucine 94, aspartate 108, and histidine 115 contribute to the S-adenosyl-L-methionine site. The segment at 301–324 (EEMKVNTRSRSAKLRVAERTGEDG) is disordered. Positions 315–324 (RVAERTGEDG) are enriched in basic and acidic residues.

It belongs to the methyltransferase superfamily. RsmH family.

The protein resides in the cytoplasm. The catalysed reaction is cytidine(1402) in 16S rRNA + S-adenosyl-L-methionine = N(4)-methylcytidine(1402) in 16S rRNA + S-adenosyl-L-homocysteine + H(+). Specifically methylates the N4 position of cytidine in position 1402 (C1402) of 16S rRNA. In Maridesulfovibrio salexigens (strain ATCC 14822 / DSM 2638 / NCIMB 8403 / VKM B-1763) (Desulfovibrio salexigens), this protein is Ribosomal RNA small subunit methyltransferase H.